The sequence spans 164 residues: CDP-archaeol synthase (164 aa).

4 helical membrane passes run 3-23 (LFVF…AVLA), 53-73 (GLAI…LLHP), 77-97 (LLDA…GAFI), and 126-146 (SLYA…TPII).

It belongs to the CDP-archaeol synthase family. Mg(2+) serves as cofactor.

The protein localises to the cell membrane. The enzyme catalyses 2,3-bis-O-(geranylgeranyl)-sn-glycerol 1-phosphate + CTP + H(+) = CDP-2,3-bis-O-(geranylgeranyl)-sn-glycerol + diphosphate. It functions in the pathway membrane lipid metabolism; glycerophospholipid metabolism. Catalyzes the formation of CDP-2,3-bis-(O-geranylgeranyl)-sn-glycerol (CDP-archaeol) from 2,3-bis-(O-geranylgeranyl)-sn-glycerol 1-phosphate (DGGGP) and CTP. This reaction is the third ether-bond-formation step in the biosynthesis of archaeal membrane lipids. The polypeptide is CDP-archaeol synthase (Pyrobaculum arsenaticum (strain DSM 13514 / JCM 11321 / PZ6)).